The chain runs to 254 residues: C-X-C motif chemokine 16 (254 aa).

The signal sequence occupies residues Met-1–Gly-29. The Extracellular segment spans residues Asn-30 to Thr-205. The interval Gly-32–Ser-107 is chemokine. Cystine bridges form between Cys-38–Cys-68 and Cys-40–Cys-82. Positions Gln-146–Thr-165 are disordered. An N-linked (GlcNAc...) asparagine glycan is attached at Asn-168. Residues Ser-178–Ala-200 are disordered. The helical transmembrane segment at Val-206–Leu-226 threads the bilayer. At Cys-227–Thr-254 the chain is on the cytoplasmic side. The disordered stretch occupies residues Arg-231–Thr-254.

This sequence belongs to the intercrine alpha (chemokine CxC) family. Glycosylated. Expressed in T-cell areas. Expressed in spleen, lymph nodes, lung, kidney, small intestine and thymus. Weak expression in heart and liver and no expression in brain and bone marrow.

The protein localises to the cell membrane. Its subcellular location is the secreted. Its function is as follows. Acts as a scavenger receptor on macrophages, which specifically binds to OxLDL (oxidized low density lipoprotein), suggesting that it may be involved in pathophysiology such as atherogenesis. Induces a strong chemotactic response. Induces calcium mobilization. Binds to CXCR6/Bonzo. This is C-X-C motif chemokine 16 (CXCL16) from Homo sapiens (Human).